The primary structure comprises 30 residues: Kappa-sparatoxin-Hv1b (30 aa).

Disulfide bonds link cysteine 3–cysteine 17, cysteine 10–cysteine 22, and cysteine 16–cysteine 26. Tryptophan 30 is modified (tryptophan amide).

It belongs to the neurotoxin 10 (Hwtx-1) family. 19 (HpTX2) subfamily. In terms of tissue distribution, expressed by the venom gland.

The protein localises to the secreted. Its function is as follows. Inhibitor of voltage-gated potassium channels of the Kv4/KCND family. Inhibition of Kv4.3/KCND3 and Kv4.2/KCND2 is strongly voltage-dependent, while inhibition of Kv4.1/KCND1 shows less voltage-dependence. Its binding site may be near the potassium channel voltage sensor. Also blocks calcium channels. This chain is Kappa-sparatoxin-Hv1b, found in Heteropoda venatoria (Brown huntsman spider).